The following is a 286-amino-acid chain: 33 kDa chaperonin (286 aa).

Disulfide bonds link Cys225-Cys227 and Cys258-Cys261.

This sequence belongs to the HSP33 family. Post-translationally, under oxidizing conditions two disulfide bonds are formed involving the reactive cysteines. Under reducing conditions zinc is bound to the reactive cysteines and the protein is inactive.

The protein resides in the cytoplasm. Its function is as follows. Redox regulated molecular chaperone. Protects both thermally unfolding and oxidatively damaged proteins from irreversible aggregation. Plays an important role in the bacterial defense system toward oxidative stress. This chain is 33 kDa chaperonin, found in Shewanella woodyi (strain ATCC 51908 / MS32).